Consider the following 142-residue polypeptide: Peptide methionine sulfoxide reductase MsrB (142 aa).

The region spanning 2–125 (IKKNKEELND…NSAAIQFIPY (124 aa)) is the MsrB domain. Catalysis depends on Cys114, which acts as the Nucleophile.

It belongs to the MsrB Met sulfoxide reductase family.

The catalysed reaction is L-methionyl-[protein] + [thioredoxin]-disulfide + H2O = L-methionyl-(R)-S-oxide-[protein] + [thioredoxin]-dithiol. In Staphylococcus epidermidis (strain ATCC 35984 / DSM 28319 / BCRC 17069 / CCUG 31568 / BM 3577 / RP62A), this protein is Peptide methionine sulfoxide reductase MsrB.